The following is a 916-amino-acid chain: Pertactin autotransporter (916 aa).

The first 37 residues, 1–37, serve as a signal peptide directing secretion; sequence MNMSLSRIVKAAPLRRTTLAMALGALGALGAAPAAHA. Residues 263-265 carry the Cell attachment site; involved in adhesion to various eukaryotic cell lines motif; it reads RGD. 3 repeat units span residues 269-273, 274-278, and 279-283. The tract at residues 269-288 is 4 X 5 AA tandem repeats of G-G-A-V-P; the sequence is GGAVPGGAVPGGAVPGGFGP. One copy of the 4; approximate repeat lies at 284-288; the sequence is GGFGP. The disordered stretch occupies residues 564–613; it reads SLVGAKAPPAPKPAPQPGPQPGPQPPQPPQPPQRQPEAPAPQPPAGRELS. Residues 571 to 607 show a composition bias toward pro residues; it reads PPAPKPAPQPGPQPGPQPPQPPQPPQRQPEAPAPQPP. The interval 578–606 is 6 X 3 AA repeats of P-Q-P; that stretch reads PQPGPQPGPQPPQPPQPPQRQPEAPAPQP. An Autotransporter domain is found at 648–916; that stretch reads LNPDAGGAWG…TFHAGYRYSW (269 aa). The Cell attachment site signature appears at 706–708; that stretch reads RGD.

As to quaternary structure, monomer.

It is found in the periplasm. Its subcellular location is the secreted. The protein resides in the cell surface. It localises to the cell outer membrane. In terms of biological role, agglutinogen that binds to eukaryotic cells; a process mediated by the R-G-D sequence. Pertactin may have a role in bacterial adhesion, and thus play a role in virulence. May contribute to the disease state of whooping cough. The chain is Pertactin autotransporter (prn) from Bordetella bronchiseptica (strain ATCC BAA-588 / NCTC 13252 / RB50) (Alcaligenes bronchisepticus).